We begin with the raw amino-acid sequence, 248 residues long: PF03932 family protein CutC (248 aa).

This sequence belongs to the CutC family. In terms of assembly, homodimer.

It localises to the cytoplasm. This is PF03932 family protein CutC from Escherichia coli (strain 55989 / EAEC).